Consider the following 137-residue polypeptide: Succinate dehydrogenase cytochrome b560 subunit (137 aa).

The next 2 helical transmembrane spans lie at Ala31–Leu51 and Phe60–Leu80. His85 contacts heme. Residues Val106–Ile126 traverse the membrane as a helical segment.

This sequence belongs to the cytochrome b560 family. In terms of assembly, forms part of complex II containing four subunits: a 70 kDa flavoprotein (FP), a 27 kDa iron-sulfur protein (IP), a cytochrome B and a membrane-anchoring protein. Heme serves as cofactor.

It is found in the mitochondrion inner membrane. The protein operates within carbohydrate metabolism; tricarboxylic acid cycle. Functionally, membrane-anchoring subunit of succinate dehydrogenase (SDH) that is involved in complex II of the mitochondrial electron transport chain and is responsible for transferring electrons from succinate to ubiquinone (coenzyme Q). This chain is Succinate dehydrogenase cytochrome b560 subunit (SDH3), found in Marchantia polymorpha (Common liverwort).